The primary structure comprises 479 residues: Kynurenine 3-monooxygenase (479 aa).

Belongs to the aromatic-ring hydroxylase family. KMO subfamily. FAD serves as cofactor.

The protein resides in the mitochondrion outer membrane. It catalyses the reaction L-kynurenine + NADPH + O2 + H(+) = 3-hydroxy-L-kynurenine + NADP(+) + H2O. The protein operates within cofactor biosynthesis; NAD(+) biosynthesis; quinolinate from L-kynurenine: step 1/3. Its function is as follows. Catalyzes the hydroxylation of L-kynurenine (L-Kyn) to form 3-hydroxy-L-kynurenine (L-3OHKyn). Required for synthesis of quinolinic acid. The chain is Kynurenine 3-monooxygenase from Chaetomium globosum (strain ATCC 6205 / CBS 148.51 / DSM 1962 / NBRC 6347 / NRRL 1970) (Soil fungus).